We begin with the raw amino-acid sequence, 36 residues long: Thrombin-like enzyme TLP (36 aa).

Positions I1–V36 constitute a Peptidase S1 domain.

The protein belongs to the peptidase S1 family. Snake venom subfamily. As to quaternary structure, monomer. Expressed by the venom gland.

It localises to the secreted. Thrombin-like snake venom serine protease. Shows strong hydrolytic activity towards Boc-Asp(oBzl)-Pro-Arg-MCA, a synthetic substrate for thrombin. The sequence is that of Thrombin-like enzyme TLP from Naja naja (Indian cobra).